The sequence spans 160 residues: MSAKAIIEQLKRLCVLHEHLLTLSEEKTEALKAGKTKELSNILTKEQKYIQAITQTEDDRIKTTSAFLGYSENNTISACIAKTSGSEKEELEQLYESLSQVLGRLKKVNEMNRQLTRDALQFISISYDMLVPKENNFNYSKSIKAELPKSSKMKLFDSKA.

Tyr49 is subject to Phosphotyrosine.

Functionally, may be involved in the assembly, structure, or function of the flagellum. May polymerize to form a filamentous structure that is part of the flagellum. This is an uncharacterized protein from Bacillus subtilis (strain 168).